We begin with the raw amino-acid sequence, 324 residues long: Meiotic recombination protein DLH1 (324 aa).

Gly112 to Thr119 serves as a coordination point for ATP. Arg214 is a dsDNA binding site. SsDNA-binding residues include Arg214, Tyr217, Arg220, Arg226, and Arg296. 2 residues coordinate dsDNA: Arg220 and Arg226.

It belongs to the RecA family. DMC1 subfamily. Double stacked ring-shaped homooctamer.

It localises to the nucleus. Required for meiotic recombination, synaptonemal complex formation and cell cycle progression. This chain is Meiotic recombination protein DLH1 (DLH1), found in Candida albicans (Yeast).